The following is a 295-amino-acid chain: uncharacterized protein (295 aa).

Its subcellular location is the plastid. The protein localises to the chloroplast. This is an uncharacterized protein from Euglena gracilis.